A 402-amino-acid chain; its full sequence is UDP-glucose 6-dehydrogenase (402 aa).

NAD(+) contacts are provided by residues K2–L19, V11, D29, K34, T83, T118, and E145. Substrate is bound by residues E141–E145, K204, N208, Y249–S253, and G257. Position 259 (Y259) interacts with NAD(+). C260 serves as the catalytic Nucleophile. Position 263 (K263) interacts with NAD(+). Residue K320 participates in substrate binding. Position 327 (R327) interacts with NAD(+).

It belongs to the UDP-glucose/GDP-mannose dehydrogenase family.

It carries out the reaction UDP-alpha-D-glucose + 2 NAD(+) + H2O = UDP-alpha-D-glucuronate + 2 NADH + 3 H(+). Its pathway is nucleotide-sugar biosynthesis; UDP-alpha-D-glucuronate biosynthesis; UDP-alpha-D-glucuronate from UDP-alpha-D-glucose: step 1/1. In terms of biological role, catalyzes the formation of UDP-glucuronic acid which is required for capsular hyaluronic acid synthesis. This is UDP-glucose 6-dehydrogenase (hasB) from Streptococcus pyogenes serotype M3 (strain ATCC BAA-595 / MGAS315).